A 362-amino-acid polypeptide reads, in one-letter code: Acyl-CoA-binding domain-containing protein 3 (362 aa).

A signal peptide spans 1 to 22 (MEVFLEMLLTAVVALLFSFLLA). Disordered stretches follow at residues 132–151 (QDEQ…SPEN) and 193–214 (VEKS…EKTE). Positions 192–221 (RVEKSSNMVEESDAEAENEEKTELTIEEDD) form a coiled coil. In terms of domain architecture, ACB spans 231–318 (LEKAFAAAVN…VSKEIPGLTK (88 aa)). An acyl-CoA contacts are provided by residues 260 to 264 (FGLHK), lysine 286, and tyrosine 305. Residues 329–362 (METSVGLPPNSGSLEDPTNLVTTGVDESSKNGIP) are disordered.

It belongs to the ACBP family. As to expression, expressed in roots, stems, leaves, flowers and siliques.

The protein resides in the secreted. It is found in the extracellular space. In terms of biological role, binds medium- and long-chain acyl-CoA esters with very high affinity. Can interact in vitro with arachidonyl-CoA, barely with oleoyl-CoA, but not with palmitoyl-CoA. This is Acyl-CoA-binding domain-containing protein 3 (ACBP3) from Arabidopsis thaliana (Mouse-ear cress).